Reading from the N-terminus, the 523-residue chain is Heparanase (523 aa).

Residues 1–18 form the signal peptide; that stretch reads MLVLLLLVLLLAVPPRRT. Heparan sulfate group contacts are provided by residues 42-44, Thr77, and 137-141; these read DAS and KKHKN. Asn141 and Asn196 each carry an N-linked (GlcNAc...) asparagine glycan. Catalysis depends on Glu204, which acts as the Proton donor. Heparan sulfate group-binding positions include 250-260, His276, and Arg283; that span reads QPRKHTQHLLR. Positions 268 to 397 are required for heterodimerization with the heparanase 8 kDa subunit; the sequence is KAIDSVTWHH…LLYKRLVGTR (130 aa). The Nucleophile role is filled by Glu323. Residues 328 to 330 and 369 to 371 contribute to the heparan sulfate group site; these read YGG and GSY. A disulfide bridge connects residues Cys417 and Cys522. N-linked (GlcNAc...) asparagine glycosylation is found at Asn436 and Asn439. The tract at residues 507–523 is required for transferring proheparanase to the Golgi apparatus, secretion and subsequent enzyme activity and for enhancement of PKB/AKT1 phosphorylation; it reads FSYGFYVIRNAKAIACI.

The protein belongs to the glycosyl hydrolase 79 family. Heterodimer; the active enzyme is a heterodimer of the 60 kDa and 45 kDa proteolytic products. N-glycosylated. Post-translationally, proteolytically cleaved to produce a 60 kDa and a 45 kDa product.

The protein localises to the secreted. The catalysed reaction is endohydrolysis of (1-&gt;4)-beta-D-glycosidic bonds of heparan sulfate chains in heparan sulfate proteoglycan.. Functionally, endoglycosidase that cleaves heparan sulfate proteoglycans (HSPGs) into heparan sulfate side chains and core proteoglycans. Participates in extracellular matrix (ECM) degradation and remodeling. Selectively cleaves the linkage between a glucuronic acid unit and an N-sulfo glucosamine unit carrying either a 3-O-sulfo or a 6-O-sulfo group. Can also cleave the linkage between a glucuronic acid unit and an N-sulfo glucosamine unit carrying a 2-O-sulfo group, but not linkages between a glucuronic acid unit and a 2-O-sulfated iduronic acid moiety. Increases cell adhesion to the extracellular matrix (ECM), independent of its enzymatic activity. The polypeptide is Heparanase (HPSE) (Gallus gallus (Chicken)).